The chain runs to 885 residues: Leucine--tRNA ligase (885 aa).

Positions 48–58 (PYPSGKLHMGH) match the 'HIGH' region motif. The 'KMSKS' region signature appears at 639–643 (TMSKS). Lysine 642 is an ATP binding site.

Belongs to the class-I aminoacyl-tRNA synthetase family.

It is found in the cytoplasm. The catalysed reaction is tRNA(Leu) + L-leucine + ATP = L-leucyl-tRNA(Leu) + AMP + diphosphate. This chain is Leucine--tRNA ligase, found in Bordetella pertussis (strain Tohama I / ATCC BAA-589 / NCTC 13251).